Here is a 101-residue protein sequence, read N- to C-terminus: Large ribosomal subunit protein uL23 (101 aa).

This sequence belongs to the universal ribosomal protein uL23 family. Part of the 50S ribosomal subunit. Contacts protein L29, and trigger factor when it is bound to the ribosome.

In terms of biological role, one of the early assembly proteins it binds 23S rRNA. One of the proteins that surrounds the polypeptide exit tunnel on the outside of the ribosome. Forms the main docking site for trigger factor binding to the ribosome. The protein is Large ribosomal subunit protein uL23 of Thiobacillus denitrificans (strain ATCC 25259 / T1).